We begin with the raw amino-acid sequence, 123 residues long: WAP four-disulfide core domain protein 5 (123 aa).

A signal peptide spans 1-24 (MRIQSLLLLGALLAVGSQLPAVFG). 2 WAP domains span residues 27-73 (KGEK…CIPR) and 74-121 (VSVK…RDPA). Cystine bridges form between cysteine 34–cysteine 62, cysteine 41–cysteine 66, cysteine 49–cysteine 61, cysteine 55–cysteine 70, cysteine 81–cysteine 109, cysteine 88–cysteine 113, cysteine 96–cysteine 108, and cysteine 102–cysteine 117.

Its subcellular location is the secreted. Putative acid-stable proteinase inhibitor. This Macaca mulatta (Rhesus macaque) protein is WAP four-disulfide core domain protein 5 (WFDC5).